The chain runs to 171 residues: S-ribosylhomocysteine lyase (171 aa).

Fe cation is bound by residues His-54, His-58, and Cys-128.

It belongs to the LuxS family. Homodimer. Fe cation is required as a cofactor.

It catalyses the reaction S-(5-deoxy-D-ribos-5-yl)-L-homocysteine = (S)-4,5-dihydroxypentane-2,3-dione + L-homocysteine. Its function is as follows. Involved in the synthesis of autoinducer 2 (AI-2) which is secreted by bacteria and is used to communicate both the cell density and the metabolic potential of the environment. The regulation of gene expression in response to changes in cell density is called quorum sensing. Catalyzes the transformation of S-ribosylhomocysteine (RHC) to homocysteine (HC) and 4,5-dihydroxy-2,3-pentadione (DPD). The polypeptide is S-ribosylhomocysteine lyase (Campylobacter concisus (strain 13826)).